The chain runs to 156 residues: Hydrogenase 3 maturation protease (156 aa).

Ni(2+) is bound by residues aspartate 16, aspartate 62, and histidine 90.

The protein belongs to the peptidase A31 family. As to quaternary structure, monomer.

It catalyses the reaction This enzyme specifically removes a 32-amino acid peptide from the C-terminus of the precursor of the large subunit of E.coli hydrogenase 3 by cleavage at the C-terminal side of Arg-537.. Functionally, protease involved in the C-terminal processing of HycE, the large subunit of hydrogenase 3. The chain is Hydrogenase 3 maturation protease (hycI) from Escherichia coli O157:H7.